The following is a 260-amino-acid chain: Phytolongin Phyl2.1 (260 aa).

The 103-residue stretch at 12 to 114 (CIAKGTVILA…LDNPTQHCLQ (103 aa)) folds into the Longin domain. The chain crosses the membrane as a helical; Anchor for type IV membrane protein span at residues 231–251 (WIVLMFDLCICLVLFGIWLWI).

It belongs to the synaptobrevin family.

It is found in the membrane. Its function is as follows. Non-SNARE longin protein involved in membrane-trafficking machinery. The sequence is that of Phytolongin Phyl2.1 from Arabidopsis thaliana (Mouse-ear cress).